The sequence spans 230 residues: 7-cyano-7-deazaguanine synthase (230 aa).

Position 14–24 (14–24 (LSGGLDSTTTL)) interacts with ATP. Zn(2+) is bound by residues C194, C204, C207, and C210.

The protein belongs to the QueC family. Zn(2+) is required as a cofactor.

It carries out the reaction 7-carboxy-7-deazaguanine + NH4(+) + ATP = 7-cyano-7-deazaguanine + ADP + phosphate + H2O + H(+). It functions in the pathway purine metabolism; 7-cyano-7-deazaguanine biosynthesis. Functionally, catalyzes the ATP-dependent conversion of 7-carboxy-7-deazaguanine (CDG) to 7-cyano-7-deazaguanine (preQ(0)). The sequence is that of 7-cyano-7-deazaguanine synthase from Ruthia magnifica subsp. Calyptogena magnifica.